Reading from the N-terminus, the 105-residue chain is MPKKVLTGVVVSDKMQKTVTVLVERQFPHPLYGKVIKRSKKYLAHDPEERYKVGDVVEIIEARPISKRKRFRVLRLVEEGRLDLVEKYLVRRQNYASLSKRGGKA.

It belongs to the universal ribosomal protein uS17 family. In terms of assembly, part of the 30S ribosomal subunit.

Its function is as follows. One of the primary rRNA binding proteins, it binds specifically to the 5'-end of 16S ribosomal RNA. This chain is Small ribosomal subunit protein uS17, found in Thermus aquaticus.